Here is a 160-residue protein sequence, read N- to C-terminus: Zinc finger A20 and AN1 domain-containing stress-associated protein 6 (160 aa).

Residues 18-52 (PEAPILCVNNCGFFGSRMTENMCSKCYRDTVKAKT) form an A20-type zinc finger. The Zn(2+) site is built by Cys24, Cys28, Cys40, and Cys43. A disordered region spans residues 73 to 94 (EVTDGGSGSVADGKQVMEEDTP). The segment at 95–141 (KPPSNRCLSCRKKVGLTGFKCRCGGTFCSMHRYADSHKCTFDYKQVG) adopts an AN1-type zinc-finger fold. Residues Cys101, Cys104, Cys115, Cys117, Cys122, His125, His131, and Cys133 each contribute to the Zn(2+) site.

Functionally, may be involved in environmental stress response. The chain is Zinc finger A20 and AN1 domain-containing stress-associated protein 6 (SAP6) from Oryza sativa subsp. japonica (Rice).